The primary structure comprises 218 residues: 7-cyano-7-deazaguanine synthase 1 (218 aa).

9 to 19 (YSGGMDSFTVL) is an ATP binding site. Cys185, Cys193, Cys196, and Cys199 together coordinate Zn(2+).

Belongs to the QueC family. Requires Zn(2+) as cofactor.

It catalyses the reaction 7-carboxy-7-deazaguanine + NH4(+) + ATP = 7-cyano-7-deazaguanine + ADP + phosphate + H2O + H(+). The protein operates within purine metabolism; 7-cyano-7-deazaguanine biosynthesis. Its function is as follows. Catalyzes the ATP-dependent conversion of 7-carboxy-7-deazaguanine (CDG) to 7-cyano-7-deazaguanine (preQ(0)). This chain is 7-cyano-7-deazaguanine synthase 1, found in Colwellia psychrerythraea (strain 34H / ATCC BAA-681) (Vibrio psychroerythus).